Reading from the N-terminus, the 252-residue chain is Geranylgeranylglyceryl phosphate synthase (252 aa).

The Mg(2+) site is built by D26 and S55. Sn-glycerol 1-phosphate contacts are provided by residues 174–180 (YLEAGSG), 205–206 (GG), and 227–228 (GT).

This sequence belongs to the GGGP/HepGP synthase family. Group II subfamily. In terms of assembly, homotetramer. Homohexamer. Mg(2+) is required as a cofactor.

The protein resides in the cytoplasm. It carries out the reaction sn-glycerol 1-phosphate + (2E,6E,10E)-geranylgeranyl diphosphate = sn-3-O-(geranylgeranyl)glycerol 1-phosphate + diphosphate. The protein operates within membrane lipid metabolism; glycerophospholipid metabolism. Functionally, prenyltransferase that catalyzes the transfer of the geranylgeranyl moiety of geranylgeranyl diphosphate (GGPP) to the C3 hydroxyl of sn-glycerol-1-phosphate (G1P). This reaction is the first ether-bond-formation step in the biosynthesis of archaeal membrane lipids. In Thermococcus kodakarensis (strain ATCC BAA-918 / JCM 12380 / KOD1) (Pyrococcus kodakaraensis (strain KOD1)), this protein is Geranylgeranylglyceryl phosphate synthase.